The primary structure comprises 950 residues: Leucine--tRNA ligase (950 aa).

Positions 72–83 (PYPSGEGLHVGH) match the 'HIGH' region motif. The short motif at 722–726 (KIGKS) is the 'KMSKS' region element. Residue K725 participates in ATP binding.

This sequence belongs to the class-I aminoacyl-tRNA synthetase family.

The protein localises to the cytoplasm. It carries out the reaction tRNA(Leu) + L-leucine + ATP = L-leucyl-tRNA(Leu) + AMP + diphosphate. This chain is Leucine--tRNA ligase, found in Mycobacterium sp. (strain KMS).